Here is a 406-residue protein sequence, read N- to C-terminus: Phosphopentomutase (406 aa).

Mn(2+) contacts are provided by aspartate 10, aspartate 305, histidine 310, aspartate 346, histidine 347, and histidine 358.

Belongs to the phosphopentomutase family. Mn(2+) is required as a cofactor.

The protein localises to the cytoplasm. It carries out the reaction 2-deoxy-alpha-D-ribose 1-phosphate = 2-deoxy-D-ribose 5-phosphate. The catalysed reaction is alpha-D-ribose 1-phosphate = D-ribose 5-phosphate. It participates in carbohydrate degradation; 2-deoxy-D-ribose 1-phosphate degradation; D-glyceraldehyde 3-phosphate and acetaldehyde from 2-deoxy-alpha-D-ribose 1-phosphate: step 1/2. Its function is as follows. Isomerase that catalyzes the conversion of deoxy-ribose 1-phosphate (dRib-1-P) and ribose 1-phosphate (Rib-1-P) to deoxy-ribose 5-phosphate (dRib-5-P) and ribose 5-phosphate (Rib-5-P), respectively. This chain is Phosphopentomutase, found in Sinorhizobium medicae (strain WSM419) (Ensifer medicae).